The sequence spans 288 residues: Polyamine aminopropyltransferase (288 aa).

The PABS domain maps to 9 to 238 (ETLHDQFGQY…GIMTFAWATD (230 aa)). Position 33 (Q33) interacts with S-methyl-5'-thioadenosine. Spermidine is bound by residues H64 and D88. Residues E108 and 140–141 (DG) contribute to the S-methyl-5'-thioadenosine site. D158 (proton acceptor) is an active-site residue. Residue 158–161 (DCTD) participates in spermidine binding. P165 provides a ligand contact to S-methyl-5'-thioadenosine.

The protein belongs to the spermidine/spermine synthase family. In terms of assembly, homodimer or homotetramer.

The protein resides in the cytoplasm. It carries out the reaction S-adenosyl 3-(methylsulfanyl)propylamine + putrescine = S-methyl-5'-thioadenosine + spermidine + H(+). Its pathway is amine and polyamine biosynthesis; spermidine biosynthesis; spermidine from putrescine: step 1/1. Functionally, catalyzes the irreversible transfer of a propylamine group from the amino donor S-adenosylmethioninamine (decarboxy-AdoMet) to putrescine (1,4-diaminobutane) to yield spermidine. The chain is Polyamine aminopropyltransferase from Shigella boydii serotype 18 (strain CDC 3083-94 / BS512).